We begin with the raw amino-acid sequence, 953 residues long: Nonsense-mediated mRNA decay factor SMG8 (953 aa).

2 disordered regions span residues 571–604 (AQDAELDPDEEDEELPTGEREEQHITQSNGCSQP) and 629–653 (PCFDQSSSSEAESTCSGTSSEESNN). A compositionally biased stretch (acidic residues) spans 574 to 586 (AELDPDEEDEELP). Residues 595-604 (ITQSNGCSQP) show a composition bias toward polar residues. The span at 634–653 (SSSSEAESTCSGTSSEESNN) shows a compositional bias: low complexity.

This sequence belongs to the SMG8 family.

Involved in nonsense-mediated decay (NMD) of mRNAs containing premature stop codons. Probable component of kinase complex containing nonC and recruited to stalled ribosomes. The chain is Nonsense-mediated mRNA decay factor SMG8 from Drosophila persimilis (Fruit fly).